The chain runs to 288 residues: Pyridoxal kinase PdxY (288 aa).

Residues Ser12 and 47 to 48 each bind substrate; that span reads TQ. Residues Asp114, Glu151, Lys184, and 211–214 contribute to the ATP site; that span reads RPLL. Asp225 serves as a coordination point for substrate.

It belongs to the pyridoxine kinase family. PdxY subfamily. Homodimer. Mg(2+) is required as a cofactor.

The catalysed reaction is pyridoxal + ATP = pyridoxal 5'-phosphate + ADP + H(+). It participates in cofactor metabolism; pyridoxal 5'-phosphate salvage; pyridoxal 5'-phosphate from pyridoxal: step 1/1. In terms of biological role, pyridoxal kinase involved in the salvage pathway of pyridoxal 5'-phosphate (PLP). Catalyzes the phosphorylation of pyridoxal to PLP. This is Pyridoxal kinase PdxY from Pseudomonas savastanoi pv. phaseolicola (strain 1448A / Race 6) (Pseudomonas syringae pv. phaseolicola (strain 1448A / Race 6)).